A 415-amino-acid polypeptide reads, in one-letter code: Phosphoglycerate kinase (415 aa).

Residues 27-29 (DIN), R44, 67-70 (HQGR), R124, and R164 each bind substrate. ATP-binding positions include E336 and 362–365 (GGHM).

Belongs to the phosphoglycerate kinase family. As to quaternary structure, monomer.

The protein localises to the cytoplasm. The enzyme catalyses (2R)-3-phosphoglycerate + ATP = (2R)-3-phospho-glyceroyl phosphate + ADP. It participates in carbohydrate degradation; glycolysis; pyruvate from D-glyceraldehyde 3-phosphate: step 2/5. The chain is Phosphoglycerate kinase from Sulfurisphaera tokodaii (strain DSM 16993 / JCM 10545 / NBRC 100140 / 7) (Sulfolobus tokodaii).